Reading from the N-terminus, the 182-residue chain is U1 small nuclear ribonucleoprotein C (182 aa).

The Matrin-type zinc finger occupies 4–36; it reads YLCDYCQVWLTHDSQSVRKAHNAGRAHIQNVQD. The disordered stretch occupies residues 129–182; it reads PQTTASSNTQLTQQQQSLPQTNEHQRARTHSNANNHFTKTHHQGQRSHQRFVRA. Low complexity predominate over residues 130–150; that stretch reads QTTASSNTQLTQQQQSLPQTN. Positions 166 to 182 are enriched in basic residues; that stretch reads TKTHHQGQRSHQRFVRA.

Belongs to the U1 small nuclear ribonucleoprotein C family. As to quaternary structure, U1 snRNP is composed of the 7 core Sm proteins smb1, smd1, smd2, smd3, sme1, smf1 and smg1 (Sm proteins B, D1, D2, D3, E, F and G, respectively) that assemble in a heptameric protein ring on the Sm site of the small nuclear RNA to form the core snRNP, and at least 9 U1 snRNP-specific proteins usp101/U1-70K, usp102/U1-A, usp103/U1-C, usp106/LUC7, usp105/PRP39, usp104/PRP40, usp107/U1-H, usp108/U1-J and usp109/U1-L. usp103/U1-C interacts with U1 snRNA and the 5' splice-site region of the pre-mRNA.

Its subcellular location is the nucleus. Functionally, component of the spliceosomal U1 snRNP, which is essential for recognition of the pre-mRNA 5' splice-site and the subsequent assembly of the spliceosome. usp103/U1-C is directly involved in initial 5' splice-site recognition for both constitutive and regulated alternative splicing. The interaction with the 5' splice-site seems to precede base-pairing between the pre-mRNA and the U1 snRNA. Stimulates commitment or early (E) complex formation by stabilizing the base pairing of the 5' end of the U1 snRNA and the 5' splice-site region. The sequence is that of U1 small nuclear ribonucleoprotein C (usp103) from Schizosaccharomyces pombe (strain 972 / ATCC 24843) (Fission yeast).